The primary structure comprises 379 residues: MTNIRKKHPLLKIINNSLIDLPTPPNISSLWNFGSLLGACLTIQIITGLFLAMHYTADTTTAFSSVAHICRDVNYGWTIRYLHANGASMFFLCLFIHVGRGLYYGSFTLLETWNVGIILLFSVMATAFMGYVLPWGQMSFWGATVITNLLSAIPYVGTDLVEWIWGGFSVSKATLTRFFALHFILPFIISALVMIHLLFLHETGSNNPLGMPSNSDKIPFHPYYTTKDFLGLLLLILLLMTTALFYPDLLGDPDNYTPANPLNTPPHIKPEWYFLFAYAILRSIPNKLGGVLALILSILILMIIPFLQPNKQQTMTFRPLSQFLFWILVADLLTLTWIGGQPVEDPFINIGQMASMLYFFLMIFIMPTSCLIENKMLKW.

Transmembrane regions (helical) follow at residues 33 to 53 (FGSL…FLAM), 77 to 98 (WTIR…FIHV), 113 to 133 (WNVG…GYVL), and 178 to 198 (FFAL…IHLL). 2 residues coordinate heme b: H83 and H97. The heme b site is built by H182 and H196. An a ubiquinone-binding site is contributed by H201. 4 helical membrane-spanning segments follow: residues 226 to 246 (TKDF…ALFY), 288 to 308 (LGGV…PFLQ), 320 to 340 (LSQF…WIGG), and 347 to 367 (FINI…FIMP).

Belongs to the cytochrome b family. The cytochrome bc1 complex contains 11 subunits: 3 respiratory subunits (MT-CYB, CYC1 and UQCRFS1), 2 core proteins (UQCRC1 and UQCRC2) and 6 low-molecular weight proteins (UQCRH/QCR6, UQCRB/QCR7, UQCRQ/QCR8, UQCR10/QCR9, UQCR11/QCR10 and a cleavage product of UQCRFS1). This cytochrome bc1 complex then forms a dimer. Heme b is required as a cofactor.

The protein resides in the mitochondrion inner membrane. In terms of biological role, component of the ubiquinol-cytochrome c reductase complex (complex III or cytochrome b-c1 complex) that is part of the mitochondrial respiratory chain. The b-c1 complex mediates electron transfer from ubiquinol to cytochrome c. Contributes to the generation of a proton gradient across the mitochondrial membrane that is then used for ATP synthesis. The sequence is that of Cytochrome b (MT-CYB) from Lepilemur ankaranensis (Ankarana sportive lemur).